The chain runs to 375 residues: Enoyl-[acyl-carrier-protein] reductase [NADH] 1, chloroplastic (375 aa).

A chloroplast-targeting transit peptide spans 1–67 (MGASAATGMQ…SSKRSGVAIR (67 aa)). NAD(+)-binding positions include G91, Y98, 155-156 (DA), 202-203 (SL), and L252. Catalysis depends on proton acceptor residues Y254 and Y264. NAD(+) contacts are provided by residues K272 and 302-306 (LGSRA).

Belongs to the short-chain dehydrogenases/reductases (SDR) family. FabI subfamily. In terms of assembly, homotetramer.

Its subcellular location is the plastid. The protein resides in the chloroplast. It catalyses the reaction a 2,3-saturated acyl-[ACP] + NAD(+) = a (2E)-enoyl-[ACP] + NADH + H(+). It functions in the pathway lipid metabolism; fatty acid biosynthesis. In terms of biological role, catalyzes the NAD-dependent reduction of a carbon-carbon double bond in an enoyl moiety that is covalently linked to an acyl carrier protein (ACP). Catalyzes the last reduction step in the de novo synthesis cycle of fatty acids. Involved in the elongation cycle of fatty acids which are used in lipid metabolism. Required for normal plant growth. The chain is Enoyl-[acyl-carrier-protein] reductase [NADH] 1, chloroplastic from Oryza sativa subsp. japonica (Rice).